Reading from the N-terminus, the 1372-residue chain is DNA-directed RNA polymerase subunit beta' (1372 aa).

Zn(2+) contacts are provided by cysteine 69, cysteine 71, cysteine 84, and cysteine 87. The Mg(2+) site is built by aspartate 460, aspartate 462, and aspartate 464. Zn(2+)-binding residues include cysteine 808, cysteine 882, cysteine 889, and cysteine 892.

It belongs to the RNA polymerase beta' chain family. In terms of assembly, the RNAP catalytic core consists of 2 alpha, 1 beta, 1 beta' and 1 omega subunit. When a sigma factor is associated with the core the holoenzyme is formed, which can initiate transcription. Mg(2+) is required as a cofactor. Requires Zn(2+) as cofactor.

It catalyses the reaction RNA(n) + a ribonucleoside 5'-triphosphate = RNA(n+1) + diphosphate. Functionally, DNA-dependent RNA polymerase catalyzes the transcription of DNA into RNA using the four ribonucleoside triphosphates as substrates. The protein is DNA-directed RNA polymerase subunit beta' of Rickettsia bellii (strain OSU 85-389).